Consider the following 185-residue polypeptide: Casparian strip membrane protein 1 (185 aa).

The Cytoplasmic segment spans residues 1–32 (MKAVSIEAGERSKAKRVHGVNRGISVFDLVLR). Residues 33 to 53 (IVALVGTLASAVAMGTAGQAL) form a helical membrane-spanning segment. Over 54–73 (SFSTQIVNFEAQYDDIDAFK) the chain is Extracellular. A helical transmembrane segment spans residues 74–94 (FFVVSNSITCVYLALSIPISI). At 95 to 106 (FHIIRSRAGKSR) the chain is on the cytoplasmic side. The helical transmembrane segment at 107–127 (VLLIVLDAIMLVFLTSGASAA) threads the bilayer. Residues 128–160 (AAIVYLAHNGNTSTNWFSICQQYTDFCQRSAGS) are Extracellular-facing. Residue asparagine 138 is glycosylated (N-linked (GlcNAc...) asparagine). A helical membrane pass occupies residues 161–181 (LIGSFGAMALMVLLIILSSIA). The Cytoplasmic segment spans residues 182-185 (LSRR).

The protein belongs to the Casparian strip membrane proteins (CASP) family. As to quaternary structure, homodimer and heterodimers.

The protein resides in the cell membrane. Regulates membrane-cell wall junctions and localized cell wall deposition. Required for establishment of the Casparian strip membrane domain (CSD) and the subsequent formation of Casparian strips, a cell wall modification of the root endodermis that determines an apoplastic barrier between the intraorganismal apoplasm and the extraorganismal apoplasm and prevents lateral diffusion. The sequence is that of Casparian strip membrane protein 1 from Solanum demissum (Wild potato).